The following is a 220-amino-acid chain: Probable acrEF/envCD operon repressor (220 aa).

Residues 10–70 (LKTRQELIET…EMWLQQPSLR (61 aa)) enclose the HTH tetR-type domain. Residues 33 to 52 (TLNDIADAANVTRGAIYWHF) constitute a DNA-binding region (H-T-H motif).

Its function is as follows. Potential regulator protein for the acrEF/envCD genes. This chain is Probable acrEF/envCD operon repressor (envR), found in Escherichia coli O157:H7.